Consider the following 714-residue polypeptide: Elongation factor G-like protein (714 aa).

A tr-type G domain is found at 21-289 (GGVRNVVLVG…VATRGFPSPM (269 aa)). A G1 region spans residues 30-37 (GPSGGGKT). A GTP-binding site is contributed by 30–37 (GPSGGGKT). The tract at residues 73–77 (QRSVG) is G2. The interval 94 to 97 (DTPG) is G3. GTP contacts are provided by residues 94 to 98 (DTPGY) and 148 to 151 (TKLD). The interval 148-151 (TKLD) is G4. Positions 267 to 269 (CSS) are G5.

Belongs to the TRAFAC class translation factor GTPase superfamily. Classic translation factor GTPase family. EF-G/EF-2 subfamily.

This is Elongation factor G-like protein from Mycobacterium tuberculosis (strain ATCC 25618 / H37Rv).